The chain runs to 128 residues: Large ribosomal subunit protein uL22 (128 aa).

The tract at residues M1–R20 is disordered. Residues I9 to R20 are compositionally biased toward basic and acidic residues.

Belongs to the universal ribosomal protein uL22 family. As to quaternary structure, part of the 50S ribosomal subunit.

This protein binds specifically to 23S rRNA; its binding is stimulated by other ribosomal proteins, e.g. L4, L17, and L20. It is important during the early stages of 50S assembly. It makes multiple contacts with different domains of the 23S rRNA in the assembled 50S subunit and ribosome. In terms of biological role, the globular domain of the protein is located near the polypeptide exit tunnel on the outside of the subunit, while an extended beta-hairpin is found that lines the wall of the exit tunnel in the center of the 70S ribosome. This chain is Large ribosomal subunit protein uL22, found in Lachnospira eligens (strain ATCC 27750 / DSM 3376 / VPI C15-48 / C15-B4) (Eubacterium eligens).